The primary structure comprises 635 residues: 1-deoxy-D-xylulose-5-phosphate synthase (635 aa).

Thiamine diphosphate is bound by residues His-74 and 115 to 117 (AHS). Asp-146 serves as a coordination point for Mg(2+). Residues 147–148 (GA), Asn-176, Tyr-283, and Glu-365 each bind thiamine diphosphate. Asn-176 provides a ligand contact to Mg(2+).

The protein belongs to the transketolase family. DXPS subfamily. Homodimer. Mg(2+) serves as cofactor. Thiamine diphosphate is required as a cofactor.

The enzyme catalyses D-glyceraldehyde 3-phosphate + pyruvate + H(+) = 1-deoxy-D-xylulose 5-phosphate + CO2. The protein operates within metabolic intermediate biosynthesis; 1-deoxy-D-xylulose 5-phosphate biosynthesis; 1-deoxy-D-xylulose 5-phosphate from D-glyceraldehyde 3-phosphate and pyruvate: step 1/1. Its function is as follows. Catalyzes the acyloin condensation reaction between C atoms 2 and 3 of pyruvate and glyceraldehyde 3-phosphate to yield 1-deoxy-D-xylulose-5-phosphate (DXP). The chain is 1-deoxy-D-xylulose-5-phosphate synthase from Paraburkholderia xenovorans (strain LB400).